We begin with the raw amino-acid sequence, 442 residues long: Probable D-serine dehydratase (442 aa).

Residue Lys111 is modified to N6-(pyridoxal phosphate)lysine.

It belongs to the serine/threonine dehydratase family. DsdA subfamily. It depends on pyridoxal 5'-phosphate as a cofactor.

The enzyme catalyses D-serine = pyruvate + NH4(+). The chain is Probable D-serine dehydratase from Sinorhizobium medicae (strain WSM419) (Ensifer medicae).